A 735-amino-acid chain; its full sequence is MSRRNPPGSRNGGGPTNASPFIKRDRMRRNFLRMRMGQNGSNSSSPGVPNGDNSRGSLVKKDDPEYAEEREKMLLQIGVEADAGRSNVKVKDEDPNEYNEFPLRAIPKEDLENMRTHLLKFQSKKKINPVTDFHLPVRLHRKDTRNLQFQLTRAEIVQRQKEISEYKKKAEQERSTPNSGGMNKSGTVSLNNTVKDGSQTPTVDSVTKDNTANGVNSSIPTVTGSSVPPASPTTVSAVESNGLSNGSTSAANGLDGNASTANLANGRPLVTKLEDAGPAEDPTKVGMVKYDGKEVTNEPEFEEGTMDPLADVAPDGGGRAKRGNLRRKTRQLKVLDENAKKLRFEEFYPWVMEDFDGYNTWVGSYEAGNSDSYVLLSVEDDGSFTMIPADKVYKFTARNKYATLTIDEAEKRMDKKSGEVPRWLMKHLDNIGTTTTRYDRTRRKLKAVADQQAMDEDDRDDNSEVELDYDEEFADDEEAPIIDGNEQENKESEQRIKKEMLQANAMGLRDEEAPSENEEDELFGEKKIDEDGERIKKALQKTELAALYSSDENEINPYLSESDIENKENESPVKKEEDSDTLSKSKRSSPKKQQKKATNAHVHKEPTLRVKSIKNCVIILKGDKKILKSFPEGEWNPQTTKAVDSSNNASNTVPSPIKQEEGLNSTVAEREETPAPTITEKDIIEAIGDGKVNIKEFGKFIRRKYPGAENKKLMFAIVKKLCRKVGNDHMELKKE.

6 disordered regions span residues 1–68, 165–263, 297–323, 446–465, 471–606, and 631–674; these read MSRR…EYAE, EYKK…TANL, NEPEFEEGTMDPLADVAPDGGGRAKRG, KAVADQQAMDEDDRDDNSEV, EEFA…HKEP, and PEGE…EETP. Positions 33–54 are enriched in low complexity; that stretch reads RMRMGQNGSNSSSPGVPNGDNS. 2 stretches are compositionally biased toward basic and acidic residues: residues 59–68 and 165–174; these read VKKDDPEYAE and EYKKKAEQER. A compositionally biased stretch (polar residues) spans 175 to 219; it reads STPNSGGMNKSGTVSLNNTVKDGSQTPTVDSVTKDNTANGVNSSI. S198 bears the Phosphoserine mark. T200 carries the phosphothreonine modification. Over residues 220-238 the composition is skewed to low complexity; it reads PTVTGSSVPPASPTTVSAV. Residues 239–263 show a composition bias toward polar residues; sequence ESNGLSNGSTSAANGLDGNASTANL. Composition is skewed to acidic residues over residues 453 to 465 and 471 to 480; these read AMDEDDRDDNSEV and EEFADDEEAP. Residues 487-500 show a composition bias toward basic and acidic residues; sequence QENKESEQRIKKEM. The span at 513-522 shows a compositional bias: acidic residues; it reads APSENEEDEL. S515 is subject to Phosphoserine. A compositionally biased stretch (basic and acidic residues) spans 523–536; the sequence is FGEKKIDEDGERIK. S560, S562, and S571 each carry phosphoserine. Basic and acidic residues predominate over residues 564 to 583; that stretch reads IENKENESPVKKEEDSDTLS. The span at 584–595 shows a compositional bias: basic residues; sequence KSKRSSPKKQQK. The span at 636 to 654 shows a compositional bias: polar residues; that stretch reads NPQTTKAVDSSNNASNTVP. S655 is subject to Phosphoserine.

It belongs to the TFIIF alpha subunit family. TFIIF is composed of three different subunits: TFG1/RAP74, TFG2/RAP30 and TAF14. Post-translationally, phosphorylated on Ser and other residues by TAF1 and casein kinase II-like kinases.

The protein resides in the nucleus. Its function is as follows. TFIIF is a general transcription initiation factor that binds to RNA polymerase II. Its functions include the recruitment of RNA polymerase II to the promoter bound DNA-TBP-TFIIB complex, decreasing the affinity of RNA polymerase II for non-specific DNA, allowing for the subsequent recruitment of TFIIE and TFIIH, and facilitating RNA polymerase II elongation. The protein is Transcription initiation factor IIF subunit alpha (TFG1) of Saccharomyces cerevisiae (strain ATCC 204508 / S288c) (Baker's yeast).